A 512-amino-acid chain; its full sequence is Maturase K (512 aa).

This sequence belongs to the intron maturase 2 family. MatK subfamily.

The protein localises to the plastid. The protein resides in the chloroplast. Its function is as follows. Usually encoded in the trnK tRNA gene intron. Probably assists in splicing its own and other chloroplast group II introns. The polypeptide is Maturase K (Amorphophallus paeoniifolius (Whitespot giant arum)).